We begin with the raw amino-acid sequence, 449 residues long: Chitobiosyldiphosphodolichol beta-mannosyltransferase (449 aa).

Residues 1–7 (MFLEIPR) lie on the Lumenal side of the membrane. Residues 8 to 28 (WLLALIILYLSIPLVVYYVIP) form a helical membrane-spanning segment. Positions 21–32 (LVVYYVIPYLFY) match the Dolichol recognition motif. Over 29-104 (YLFYGNKSTK…SNLKRKGGGT (76 aa)) the chain is Cytoplasmic. The segment at residues 105-125 (SVIFMVKKVLFQVLSIFKLLW) is an intramembrane region (helical). Topologically, residues 126–449 (ELRGSDYILV…RTMRDLKLIH (324 aa)) are cytoplasmic. The interval 435-449 (QSNWERTMRDLKLIH) is required for oligomerization.

Belongs to the glycosyltransferase group 1 family. Glycosyltransferase 33 subfamily. As to quaternary structure, homodimer. ALG1 forms mannosyltransferases (MT) heteromeric complexes with either ALG2 or ALG11.

The protein localises to the endoplasmic reticulum membrane. It carries out the reaction an N,N'-diacetylchitobiosyl-diphospho-di-trans,poly-cis-dolichol + GDP-alpha-D-mannose = a beta-D-Man-(1-&gt;4)-beta-D-GlcNAc-(1-&gt;4)-alpha-D-GlcNAc-diphospho-di-trans,poly-cis-dolichol + GDP + H(+). Its pathway is protein modification; protein glycosylation. In terms of biological role, participates in the formation of the lipid-linked precursor oligosaccharide for N-glycosylation. Involved in assembling the dolichol-pyrophosphate-GlcNAc(2)-Man(5) intermediate on the cytoplasmic surface of the ER. This is Chitobiosyldiphosphodolichol beta-mannosyltransferase (ALG1) from Saccharomyces cerevisiae (strain ATCC 204508 / S288c) (Baker's yeast).